The sequence spans 467 residues: Dihydroorotase (467 aa).

The Zn(2+) site is built by His-60 and His-62. Substrate is bound by residues 62-64 (HFR) and Asn-94. Zn(2+)-binding residues include Glu-146, His-180, His-234, and Asp-313. Residue Asp-313 is part of the active site. Residue His-317 coordinates substrate. Residues 439–467 (KPGRGEFLEGSGKRSEEDEEENSEETGSD) are disordered. Residues 441-454 (GRGEFLEGSGKRSE) are compositionally biased toward basic and acidic residues. Residues 455–467 (EDEEENSEETGSD) show a composition bias toward acidic residues.

This sequence belongs to the metallo-dependent hydrolases superfamily. DHOase family. Class I DHOase subfamily. Zn(2+) serves as cofactor.

The enzyme catalyses (S)-dihydroorotate + H2O = N-carbamoyl-L-aspartate + H(+). Its pathway is pyrimidine metabolism; UMP biosynthesis via de novo pathway; (S)-dihydroorotate from bicarbonate: step 3/3. Catalyzes the reversible cyclization of carbamoyl aspartate to dihydroorotate. This is Dihydroorotase from Methanosarcina acetivorans (strain ATCC 35395 / DSM 2834 / JCM 12185 / C2A).